The following is a 1109-amino-acid chain: ABC transporter G family member 28 (1109 aa).

2 helical membrane-spanning segments follow: residues 5–25 (NSYFPGNFVPLFFVFIVLILQ) and 291–311 (NITAYGIMLFAGLGFLLIILY). The interval 325-411 (QAKSREKAVQ…DTKKGKKKEK (87 aa)) is disordered. Positions 339–357 (SQSREKWKSAKDIAKKHAT) are enriched in basic and acidic residues. In terms of domain architecture, ABC transporter spans 499–741 (VAFKDLSITL…FSSLGIVVPE (243 aa)). An ATP-binding site is contributed by 533 to 540 (GPSGAGKT). The ABC transmembrane type-2 domain maps to 859 to 1056 (QQYRYFLGRL…ALEAFVVSNA (198 aa)). A run of 6 helical transmembrane segments spans residues 879 to 899 (LAVDYLILLLAGICLGTLAKV), 904 to 924 (FGAMGYTYTVIAVSLLCKITA), 954 to 974 (TVDHFNTIVKPLVYLSMFYFF), 986 to 1006 (VVLICLVYCVTGIAYTLAILF), 1008 to 1028 (PGPAQLWSVLLPVVLTLIATS), and 1084 to 1104 (CLVFLTLTGILSRCAAFFCMV).

It belongs to the ABC transporter superfamily. ABCG family. Eye pigment precursor importer (TC 3.A.1.204) subfamily.

Its subcellular location is the membrane. This chain is ABC transporter G family member 28 (ABCG28), found in Arabidopsis thaliana (Mouse-ear cress).